A 388-amino-acid polypeptide reads, in one-letter code: Chaperone protein DnaJ (388 aa).

The J domain maps to 5–70 (DYYEVLGVAR…QKRAAYDRFG (66 aa)). Residues 141–219 (GKTETIRLPT…CGGAGRVTRE (79 aa)) form a CR-type zinc finger. Positions 154, 157, 171, 174, 193, 196, 207, and 210 each coordinate Zn(2+). CXXCXGXG motif repeat units lie at residues 154-161 (CEVCAGSG), 171-178 (CPTCGGYG), 193-200 (CPNCHGRG), and 207-214 (CTACGGAG).

It belongs to the DnaJ family. Homodimer. It depends on Zn(2+) as a cofactor.

It localises to the cytoplasm. Functionally, participates actively in the response to hyperosmotic and heat shock by preventing the aggregation of stress-denatured proteins and by disaggregating proteins, also in an autonomous, DnaK-independent fashion. Unfolded proteins bind initially to DnaJ; upon interaction with the DnaJ-bound protein, DnaK hydrolyzes its bound ATP, resulting in the formation of a stable complex. GrpE releases ADP from DnaK; ATP binding to DnaK triggers the release of the substrate protein, thus completing the reaction cycle. Several rounds of ATP-dependent interactions between DnaJ, DnaK and GrpE are required for fully efficient folding. Also involved, together with DnaK and GrpE, in the DNA replication of plasmids through activation of initiation proteins. The chain is Chaperone protein DnaJ from Methylobacterium nodulans (strain LMG 21967 / CNCM I-2342 / ORS 2060).